The sequence spans 270 residues: Gap junction beta-3 protein (270 aa).

Residues Met1–Phe20 lie on the Cytoplasmic side of the membrane. A helical transmembrane segment spans residues Gly21–Ala40. The Extracellular segment spans residues Glu41–Arg75. Residues Leu76–Arg98 traverse the membrane as a helical segment. Residues Glu99 to Gly126 lie on the Cytoplasmic side of the membrane. Residues Leu127–Leu149 form a helical membrane-spanning segment. Topologically, residues His150–Thr188 are extracellular. The chain crosses the membrane as a helical span at residues Tyr189–Phe211. Over His212–Ile270 the chain is Cytoplasmic.

This sequence belongs to the connexin family. Beta-type (group I) subfamily. A connexon is composed of a hexamer of connexins. Interacts with CNST.

It localises to the cell membrane. The protein resides in the cell junction. The protein localises to the gap junction. One gap junction consists of a cluster of closely packed pairs of transmembrane channels, the connexons, through which materials of low MW diffuse from one cell to a neighboring cell. The polypeptide is Gap junction beta-3 protein (Gjb3) (Rattus norvegicus (Rat)).